The sequence spans 305 residues: tRNA dimethylallyltransferase (305 aa).

11-18 lines the ATP pocket; it reads GPTAVGKT. Position 13–18 (13–18) interacts with substrate; the sequence is TAVGKT. The tract at residues 36-39 is interaction with substrate tRNA; that stretch reads DSMQ.

It belongs to the IPP transferase family. As to quaternary structure, monomer. Mg(2+) serves as cofactor.

The enzyme catalyses adenosine(37) in tRNA + dimethylallyl diphosphate = N(6)-dimethylallyladenosine(37) in tRNA + diphosphate. Functionally, catalyzes the transfer of a dimethylallyl group onto the adenine at position 37 in tRNAs that read codons beginning with uridine, leading to the formation of N6-(dimethylallyl)adenosine (i(6)A). The chain is tRNA dimethylallyltransferase from Listeria monocytogenes serovar 1/2a (strain ATCC BAA-679 / EGD-e).